Here is a 105-residue protein sequence, read N- to C-terminus: Intermembrane phospholipid transport system binding protein MlaB (105 aa).

Residues 4-105 enclose the STAS domain; sequence WDLQKNNDKI…GLSDWIANFI (102 aa).

The complex is composed of two ATP-binding proteins (MlaF), two transmembrane proteins (MlaE), two cytoplasmic solute-binding proteins (MlaB) and six periplasmic solute-binding proteins (MlaD).

It is found in the cytoplasm. Functionally, part of the ABC transporter complex MlaFEDB, which is involved in a phospholipid transport pathway that maintains lipid asymmetry in the outer membrane by retrograde trafficking of phospholipids from the outer membrane to the inner membrane. MlaB plays critical roles in both the assembly and activity of the complex. May act by modulating MlaF structure and stability. The protein is Intermembrane phospholipid transport system binding protein MlaB of Haemophilus influenzae (strain ATCC 51907 / DSM 11121 / KW20 / Rd).